We begin with the raw amino-acid sequence, 600 residues long: Aspartate--tRNA(Asp/Asn) ligase (600 aa).

Position 187 (Glu-187) interacts with L-aspartate. The segment at 211–214 is aspartate; sequence QIFK. The L-aspartate site is built by Arg-233 and His-463. An ATP-binding site is contributed by 233-235; the sequence is RDE. Glu-497 contributes to the ATP binding site. Arg-504 is an L-aspartate binding site. 549–552 is an ATP binding site; it reads GVDR.

This sequence belongs to the class-II aminoacyl-tRNA synthetase family. Type 1 subfamily. In terms of assembly, homodimer.

It is found in the cytoplasm. It catalyses the reaction tRNA(Asx) + L-aspartate + ATP = L-aspartyl-tRNA(Asx) + AMP + diphosphate. Aspartyl-tRNA synthetase with relaxed tRNA specificity since it is able to aspartylate not only its cognate tRNA(Asp) but also tRNA(Asn). Reaction proceeds in two steps: L-aspartate is first activated by ATP to form Asp-AMP and then transferred to the acceptor end of tRNA(Asp/Asn). The polypeptide is Aspartate--tRNA(Asp/Asn) ligase (Wolbachia pipientis wMel).